The chain runs to 155 residues: UPF0060 membrane protein MA_3936 (155 aa).

A run of 3 helical transmembrane segments spans residues 8–28, 35–55, and 62–82; these read LCPFFLAALFEIRGGYLICLW, AVFGPLGRLMLAVCGIIPTFQ, and VYAAHGGIFIVFSLIWDLFVD.

Belongs to the UPF0060 family.

It localises to the cell membrane. This is UPF0060 membrane protein MA_3936 from Methanosarcina acetivorans (strain ATCC 35395 / DSM 2834 / JCM 12185 / C2A).